Here is a 648-residue protein sequence, read N- to C-terminus: ATP-dependent DNA helicase Q1 (648 aa).

Residues 100–275 (INVTMARKDI…QKILCVGKCL (176 aa)) enclose the Helicase ATP-binding domain. Residue 113–120 (MPTGGGKS) coordinates ATP. A DEVH box motif is present at residues 219-222 (DEVH). The region spanning 299 to 451 (DFTEDIVKLI…EMVSYCQNVS (153 aa)) is the Helicase C-terminal domain. The Zn(2+) site is built by Cys453, Cys471, Cys475, and Cys478. An N6-acetyllysine mark is found at Lys514 and Lys522. Ser597 bears the Phosphoserine mark. The disordered stretch occupies residues 601 to 648 (ALSEARQVEQVDSKGEEQSSGNSQKSKSRLQPSGSKNAGAKKRKLDDA). Basic and acidic residues predominate over residues 606 to 617 (RQVEQVDSKGEE). Over residues 618–636 (QSSGNSQKSKSRLQPSGSK) the composition is skewed to polar residues. Ser633 carries the post-translational modification Phosphoserine. A compositionally biased stretch (basic residues) spans 639-648 (GAKKRKLDDA).

The protein belongs to the helicase family. RecQ subfamily. In terms of assembly, may form homodimers or higher order oligomers. Interacts with EXO1. Interacts with MLH1. Interacts with PARP1. Requires Mg(2+) as cofactor. It depends on Mn(2+) as a cofactor. Zn(2+) serves as cofactor. Expressed in all tissues examined. As to expression, only expressed in spermatocytes. Expression increases at pachytene (17 days old) and decreases after completion of meiosis II (7 weeks old).

The protein localises to the nucleus. It catalyses the reaction Couples ATP hydrolysis with the unwinding of duplex DNA by translocating in the 3'-5' direction.. It carries out the reaction ATP + H2O = ADP + phosphate + H(+). The enzyme catalyses dATP + H2O = dADP + phosphate + H(+). Its function is as follows. DNA helicase that plays a role in DNA damage repair and genome stability. Exhibits a magnesium- and ATP-dependent DNA-helicase activity that unwinds single- and double-stranded DNA in a 3'-5' direction. Plays a role in restoring regressed replication forks. Required to restart stalled replication forks induced by abortive topoisomerase 1 and 2 lesions. May play a role in the repair of DNA that is damaged by ultraviolet light or other mutagens. This chain is ATP-dependent DNA helicase Q1 (Recql), found in Mus musculus (Mouse).